We begin with the raw amino-acid sequence, 93 residues long: Small ribosomal subunit protein uS19 (93 aa).

Belongs to the universal ribosomal protein uS19 family.

Its function is as follows. Protein S19 forms a complex with S13 that binds strongly to the 16S ribosomal RNA. In Frankia casuarinae (strain DSM 45818 / CECT 9043 / HFP020203 / CcI3), this protein is Small ribosomal subunit protein uS19.